Consider the following 266-residue polypeptide: tRNA pseudouridine synthase A (266 aa).

Asp57 (nucleophile) is an active-site residue. A substrate-binding site is contributed by Tyr115.

Belongs to the tRNA pseudouridine synthase TruA family. As to quaternary structure, homodimer.

It carries out the reaction uridine(38/39/40) in tRNA = pseudouridine(38/39/40) in tRNA. In terms of biological role, formation of pseudouridine at positions 38, 39 and 40 in the anticodon stem and loop of transfer RNAs. The chain is tRNA pseudouridine synthase A from Buchnera aphidicola subsp. Acyrthosiphon pisum (strain Tuc7).